The following is a 370-amino-acid chain: Translocating chain-associated membrane protein 2 (370 aa).

Over 1 to 22 the chain is Cytoplasmic; the sequence is MAFRRRTKSYPLFSQEFVIHNH. Residues 23–43 traverse the membrane as a helical segment; that stretch reads ADIGFCLVLCVLIGLMFEVTA. Over 44–75 the chain is Extracellular; that stretch reads KTAFLFILPQYNISVPTADSETVHYHYGPKDL. N-linked (GlcNAc...) asparagine glycosylation occurs at Asn55. A helical transmembrane segment spans residues 76–96; the sequence is VTILFYIFITIILHAVVQEYI. Residues 97-119 lie on the Cytoplasmic side of the membrane; the sequence is LDKISKRLHLSKVKHSKFNESGQ. The TLC domain occupies 112-321; sequence SKFNESGQLV…HSQLRHWREY (210 aa). Residues 120 to 140 traverse the membrane as a helical segment; that stretch reads LVVFHFTSVIWCFYVVVTEGY. The Extracellular portion of the chain corresponds to 141–159; sequence LTNPRSLWEDYPHVHLPFQ. The helical transmembrane segment at 160-180 threads the bilayer; it reads VKFFYLCQLAYWLHALPELYF. At 181 to 191 the chain is on the cytoplasmic side; sequence QKVRKEEIPRQ. Residues 192-209 traverse the membrane as a helical segment; sequence LQYICLYLVHIAGAYLLN. At 210-214 the chain is on the extracellular side; the sequence is LSRLG. Residues 215–235 form a helical membrane-spanning segment; the sequence is LILLLLQYSTEFLFHTARLFY. Topologically, residues 236–250 are cytoplasmic; the sequence is FADENNEKLFSAWAA. A helical membrane pass occupies residues 251-271; it reads VFGVTRLFILTLAVLAIGFGL. Residues 272 to 287 lie on the Extracellular side of the membrane; it reads ARMENQAFDPEKGNFN. Residues 288-308 form a helical membrane-spanning segment; that stretch reads TLFCRLCVLLLVCAAQAWLMW. The Cytoplasmic segment spans residues 309–370; it reads RFIHSQLRHW…SPRTKKLKSP (62 aa). Residues 348–370 are disordered; the sequence is YHENGVVKAENGTSPRTKKLKSP.

Belongs to the TRAM family. In terms of assembly, interacts with SERCA2B and COL1A1.

The protein resides in the membrane. Functionally, necessary for collagen type I synthesis. May couple the activity of the ER Ca(2+) pump SERCA2B with the activity of the translocon. This coupling may increase the local Ca(2+) concentration at the site of collagen synthesis, and a high Ca(2+) concentration may be necessary for the function of molecular chaperones involved in collagen folding. Required for proper insertion of the first transmembrane helix N-terminus of TM4SF20 into the ER lumen, may act as a ceramide sensor for regulated alternative translocation (RAT). This is Translocating chain-associated membrane protein 2 (TRAM2) from Homo sapiens (Human).